Reading from the N-terminus, the 458-residue chain is UPF0210 protein MmarC5_0151 (458 aa).

This sequence belongs to the UPF0210 family.

The protein is UPF0210 protein MmarC5_0151 of Methanococcus maripaludis (strain C5 / ATCC BAA-1333).